A 44-amino-acid chain; its full sequence is Defensin-like peptide (44 aa).

Intrachain disulfides connect Cys7–Cys32, Cys18–Cys40, and Cys22–Cys42.

As to expression, hemolymph.

Its subcellular location is the secreted. Functionally, has antibacterial activity against the Gram-positive bacterium S.lutea (MIC=1.9 uM). Lacks antibacterial activity against the Gram-positive bacteria L.monocytogenes and M.luteus, and the Gram-negative bacteria E.coli D31, E.coli ATCC 25922, and S.typhimurium. Has antifungal activity against A.niger (MIC=2.9 uM), C.albicans (MIC=2.9 uM), C.fructus (MIC=2.9 uM), C.wickerhamii (MIC=2.9 uM), P.pastoris (MIC=2.9 uM), P.stiptis (MIC=2.9 uM), P.tannophilus (MIC=2.9 uM), T.harzianum (MIC=2.9 uM), and Z.marxianus (MIC=2.9 uM), but lacks antifungal activity against C.albidus, F.oxysporum, and S.cerevisiae. This chain is Defensin-like peptide, found in Galleria mellonella (Greater wax moth).